The following is a 932-amino-acid chain: Protocadherin gamma-A9 (932 aa).

Positions 1-28 are cleaved as a signal peptide; sequence MAAPTKCQLRGRLVLLCSLLGMLWEARA. Cadherin domains follow at residues 29 to 133, 134 to 242, 243 to 347, 348 to 452, 453 to 562, and 570 to 683; these read SQIR…APKF, QAES…APVF, AQRI…RPEV, TITS…PPAF, SQAS…APEI, and DGST…IPAD. Residues 29 to 692 are Extracellular-facing; the sequence is SQIRYSVPEE…DLEASDLTLY (664 aa). Residues Asn-47 and Asn-127 are each glycosylated (N-linked (GlcNAc...) asparagine). Residues Asn-389, Asn-419, and Asn-545 are each glycosylated (N-linked (GlcNAc...) asparagine). Residues 693–713 traverse the membrane as a helical segment; it reads LVVAVAVVSCVFLTFVITLLA. Topologically, residues 714–932 are cytoplasmic; sequence LRLRHWHSSH…KKKSGKKEKK (219 aa). Disordered stretches follow at residues 803–841 and 902–932; these read DTPL…WPNN and ATLT…KEKK. Positions 816–841 are enriched in polar residues; it reads WRFSQAQRPGTSGSQNGDDTGTWPNN. Basic residues predominate over residues 922-932; it reads NKKKSGKKEKK.

The protein resides in the cell membrane. Functionally, potential calcium-dependent cell-adhesion protein. May be involved in the establishment and maintenance of specific neuronal connections in the brain. In Homo sapiens (Human), this protein is Protocadherin gamma-A9 (PCDHGA9).